A 290-amino-acid chain; its full sequence is Agroclavine dehydrogenase (290 aa).

Belongs to the fgaFS/easG family. As to quaternary structure, monomer.

It catalyses the reaction agroclavine + NADP(+) = didehydroagroclavine + NADPH + H(+). The protein operates within alkaloid biosynthesis; ergot alkaloid biosynthesis. Agroclavine dehydrogenase; part of the gene cluster that mediates the biosynthesis of fungal ergot alkaloid. DmaW catalyzes the first step of ergot alkaloid biosynthesis by condensing dimethylallyl diphosphate (DMAP) and tryptophan to form 4-dimethylallyl-L-tryptophan. The second step is catalyzed by the methyltransferase easF that methylates 4-dimethylallyl-L-tryptophan in the presence of S-adenosyl-L-methionine, resulting in the formation of 4-dimethylallyl-L-abrine. The catalase easC and the FAD-dependent oxidoreductase easE then transform 4-dimethylallyl-L-abrine to chanoclavine-I which is further oxidized by easD in the presence of NAD(+), resulting in the formation of chanoclavine-I aldehyde. Agroclavine dehydrogenase easG then mediates the conversion of chanoclavine-I aldehyde to agroclavine via a non-enzymatic adduct reaction: the substrate is an iminium intermediate that is formed spontaneously from chanoclavine-I aldehyde in the presence of glutathione. The presence of easA is not required to complete this reaction. Further conversion of agroclavine to paspalic acid is a two-step process involving oxidation of agroclavine to elymoclavine and of elymoclavine to paspalic acid, the second step being performed by the elymoclavine oxidase cloA. Paspalic acid is then further converted to D-lysergic acid. Ergopeptines are assembled from D-lysergic acid and three different amino acids by the D-lysergyl-peptide-synthetases composed each of a monomudular and a trimodular nonribosomal peptide synthetase subunit. LpsB and lpsC encode the monomodular subunits responsible for D-lysergic acid activation and incorporation into the ergopeptine backbone. LpsA1 and A2 subunits encode the trimodular nonribosomal peptide synthetase assembling the tripeptide portion of ergopeptines. LpsA1 is responsible for formation of the major ergopeptine, ergotamine, and lpsA2 for alpha-ergocryptine, the minor ergopeptine of the total alkaloid mixture elaborated by C.purpurea. D-lysergyl-tripeptides are assembled by the nonribosomal peptide synthetases and released as N-(D-lysergyl-aminoacyl)-lactams. Cyclolization of the D-lysergyl-tripeptides is performed by the Fe(2+)/2-ketoglutarate-dependent dioxygenase easH which introduces a hydroxyl group into N-(D-lysergyl-aminoacyl)-lactam at alpha-C of the aminoacyl residue followed by spontaneous condensation with the terminal lactam carbonyl group. The sequence is that of Agroclavine dehydrogenase from Claviceps purpurea (Ergot fungus).